The sequence spans 347 residues: NADH-ubiquinone oxidoreductase chain 2 (347 aa).

10 helical membrane passes run 1-21 (MNPL…LIVM), 25-45 (HWFM…PLLT), 67-87 (SMLL…WSIM), 111-131 (FHFW…LILL), 144-164 (MIMP…SIAI), 178-198 (IMAY…AYNP), 201-221 (TLLN…LLMI), 237-257 (LPLI…LPPL), 274-294 (SSII…YFYT), and 326-346 (LPLM…MPIL).

Belongs to the complex I subunit 2 family. Core subunit of respiratory chain NADH dehydrogenase (Complex I) which is composed of 45 different subunits. Interacts with TMEM242.

Its subcellular location is the mitochondrion inner membrane. The enzyme catalyses a ubiquinone + NADH + 5 H(+)(in) = a ubiquinol + NAD(+) + 4 H(+)(out). Core subunit of the mitochondrial membrane respiratory chain NADH dehydrogenase (Complex I) which catalyzes electron transfer from NADH through the respiratory chain, using ubiquinone as an electron acceptor. Essential for the catalytic activity and assembly of complex I. The polypeptide is NADH-ubiquinone oxidoreductase chain 2 (Myotis simus (Velvety myotis)).